The sequence spans 351 residues: Inhibin beta C chain (351 aa).

An N-terminal signal peptide occupies residues 1-18; that stretch reads MASSLLLALLFLTLATVV. A propeptide spanning residues 19–236 is cleaved from the precursor; sequence NLKTDGPCPA…EGKHRVRRRG (218 aa). N-linked (GlcNAc...) asparagine glycosylation is found at Asn-110, Asn-142, and Asn-160. 4 disulfides stabilise this stretch: Cys-239–Cys-247, Cys-246–Cys-316, Cys-275–Cys-348, and Cys-279–Cys-350.

It belongs to the TGF-beta family. As to quaternary structure, homodimeric or heterodimeric through association with alpha and beta subunits, linked by one or more disulfide bonds. Inhibins are heterodimers of one alpha and one beta subunit. Activins are homo- or heterodimers of beta subunits only.

The protein resides in the secreted. Its function is as follows. Inhibins and activins inhibit and activate, respectively, the secretion of follitropin by the pituitary gland. Inhibins/activins are involved in regulating a number of diverse functions such as hypothalamic and pituitary hormone secretion, gonadal hormone secretion, germ cell development and maturation, erythroid differentiation, insulin secretion, nerve cell survival, embryonic axial development or bone growth, depending on their subunit composition. Inhibins appear to oppose the functions of activins. The chain is Inhibin beta C chain (Inhbc) from Rattus norvegicus (Rat).